The primary structure comprises 475 residues: E3 ubiquitin-protein ligase TRIM62 (475 aa).

The RING-type zinc finger occupies 11–54 (CSICLSIYQDPVSLGCEHYFCRRCITEHWVRQEAQGARDCPECR). Residues 88 to 128 (RAARPCQAHDKVKLFCLTDRALLCFFCDEPALHEQHQVTGI) form a B box-type zinc finger. Positions 93, 96, 114, and 120 each coordinate Zn(2+). The stretch at 127 to 241 (GIDDAFDELQ…LQERLAETDR (115 aa)) forms a coiled coil. Residues 277-475 (PLQYTIWKSL…QPLRINTVRI (199 aa)) enclose the B30.2/SPRY domain.

The protein belongs to the TRIM/RBCC family. Interacts with the ubiquitin-conjugating enzyme, UBE2D2. In terms of processing, polyubiquitinated, autoubiquitinated in the presence of UBE2D2.

The protein localises to the cytoplasm. The enzyme catalyses S-ubiquitinyl-[E2 ubiquitin-conjugating enzyme]-L-cysteine + [acceptor protein]-L-lysine = [E2 ubiquitin-conjugating enzyme]-L-cysteine + N(6)-ubiquitinyl-[acceptor protein]-L-lysine.. Its pathway is protein modification; protein ubiquitination. E3 ubiquitin ligase that plays a role in antifungal immunity by mediating 'Lys-27'-linked ubiquitination of CARD9 downstream of C-type lectin receptors; leading to CARD9 activation, followed by activation of NF-kappa-B and MAP kinase p38 pathways. E3 ubiquitin ligase activity is dependent on E2 ubiquitin-conjugating enzyme UBE2D2. This is E3 ubiquitin-protein ligase TRIM62 from Homo sapiens (Human).